The sequence spans 234 residues: Enterobactin synthase component D (234 aa).

Asp-107, Glu-109, and Glu-152 together coordinate Mg(2+).

This sequence belongs to the P-Pant transferase superfamily. EntD family. In terms of assembly, entB, EntD, EntE, and EntF form a multienzyme complex called enterobactin synthase. Mg(2+) serves as cofactor.

It localises to the membrane. It catalyses the reaction apo-[aryl-carrier protein] + CoA = holo-[aryl-carrier protein] + adenosine 3',5'-bisphosphate + H(+). The catalysed reaction is apo-[peptidyl-carrier protein] + CoA = holo-[peptidyl-carrier protein] + adenosine 3',5'-bisphosphate + H(+). It participates in siderophore biosynthesis; enterobactin biosynthesis. Involved in the biosynthesis of the siderophore enterobactin (enterochelin), which is a macrocyclic trimeric lactone of N-(2,3-dihydroxybenzoyl)-serine. The serine trilactone serves as a scaffolding for the three catechol functionalities that provide hexadentate coordination for the tightly ligated iron(2+) atoms. Plays an essential role in the assembly of the enterobactin by catalyzing the transfer of the 4'-phosphopantetheine (Ppant) moiety from coenzyme A to the apo-domains of both EntB (ArCP domain) and EntF (PCP domain) to yield their holo-forms which make them competent for the activation of 2,3-dihydroxybenzoate (DHB) and L-serine, respectively. The polypeptide is Enterobactin synthase component D (Salmonella typhi).